A 404-amino-acid chain; its full sequence is Nesprin-4 (404 aa).

Disordered regions lie at residues 1–91 (MALS…GGKH) and 277–347 (GQRG…GAPD). The Cytoplasmic portion of the chain corresponds to 1–355 (MALSLPLGPR…PDPASRQPLT (355 aa)). Residues 39 to 52 (EESTSPEQAQTLGQ) show a composition bias toward polar residues. Residues 307–320 (HQKRLARHQRHSLL) are compositionally biased toward basic residues. The 58-residue stretch at 347–404 (DPASRQPLTFLLILFLLFLLLVGAMFLLPASGGPCCSHARIPRTPYLVLSYVNGLPPV) folds into the KASH domain. The chain crosses the membrane as a helical; Anchor for type IV membrane protein span at residues 356 to 376 (FLLILFLLFLLLVGAMFLLPA). Residues 377–404 (SGGPCCSHARIPRTPYLVLSYVNGLPPV) are Perinuclear space-facing.

Belongs to the nesprin family. In terms of assembly, core component of LINC complexes which are composed of inner nuclear membrane SUN domain-containing proteins coupled to outer nuclear membrane KASH domain-containing nesprins. SUN and KASH domain-containing proteins seem to bind each other promiscuously; however, differentially expression of LINC complex constituents can give rise to specific assemblies. Probably part of a SUN1-containing LINC complex. Interacts with kinesins KIF5B and KLC1. Post-translationally, the disulfid bond with SUN1 or SUN2 is required for stability of the respective LINC complex under tensile forces.

It localises to the nucleus outer membrane. Functionally, as a component of the LINC (LInker of Nucleoskeleton and Cytoskeleton) complex, involved in the connection between the nuclear lamina and the cytoskeleton. The nucleocytoplasmic interactions established by the LINC complex play an important role in the transmission of mechanical forces across the nuclear envelope and in nuclear movement and positioning. Behaves as a kinesin cargo, providing a functional binding site for kinesin-1 at the nuclear envelope. Hence may contribute to the establishment of secretory epithelial morphology by promoting kinesin-dependent apical migration of the centrosome and Golgi apparatus and basal localization of the nucleus. The sequence is that of Nesprin-4 (SYNE4) from Homo sapiens (Human).